Here is a 397-residue protein sequence, read N- to C-terminus: Serpin B10 (397 aa).

The Nuclear localization signal signature appears at 74–77 (KKRK).

It belongs to the serpin family. Ov-serpin subfamily.

The protein resides in the nucleus. It is found in the cytoplasm. In terms of biological role, protease inhibitor that may play a role in the regulation of protease activities during hematopoiesis and apoptosis induced by TNF. May regulate protease activities in the cytoplasm and in the nucleus. This is Serpin B10 (SERPINB10) from Bos taurus (Bovine).